The primary structure comprises 150 residues: Lipoprotein signal peptidase (150 aa).

The next 3 helical transmembrane spans lie at 8 to 28 (FYALVGFLVFLDQVTKYLAHA), 58 to 78 (GFSWLFFLLGIIALIFIGWFL), and 81 to 101 (TTGSIVFLALLQGGIAGNVFD). Residues D116 and D132 contribute to the active site. Residues 126-146 (VVFNIADLFILAGVFGTFLFL) traverse the membrane as a helical segment.

The protein belongs to the peptidase A8 family.

It localises to the cell membrane. It carries out the reaction Release of signal peptides from bacterial membrane prolipoproteins. Hydrolyzes -Xaa-Yaa-Zaa-|-(S,diacylglyceryl)Cys-, in which Xaa is hydrophobic (preferably Leu), and Yaa (Ala or Ser) and Zaa (Gly or Ala) have small, neutral side chains.. It participates in protein modification; lipoprotein biosynthesis (signal peptide cleavage). This protein specifically catalyzes the removal of signal peptides from prolipoproteins. This is Lipoprotein signal peptidase from Tropheryma whipplei (strain TW08/27) (Whipple's bacillus).